Here is a 212-residue protein sequence, read N- to C-terminus: Pyridoxine/pyridoxamine 5'-phosphate oxidase (212 aa).

Substrate is bound by residues 7–10 (REEY) and Lys-65. FMN is bound by residues 60–65 (RTVLLK), 75–76 (FT), Lys-82, and Gln-104. Positions 122, 126, and 130 each coordinate substrate. FMN-binding positions include 139–140 (QS) and Trp-184. Position 190–192 (190–192 (RLH)) interacts with substrate. Arg-194 contributes to the FMN binding site.

It belongs to the pyridoxamine 5'-phosphate oxidase family. In terms of assembly, homodimer. The cofactor is FMN.

It catalyses the reaction pyridoxamine 5'-phosphate + O2 + H2O = pyridoxal 5'-phosphate + H2O2 + NH4(+). The catalysed reaction is pyridoxine 5'-phosphate + O2 = pyridoxal 5'-phosphate + H2O2. It participates in cofactor metabolism; pyridoxal 5'-phosphate salvage; pyridoxal 5'-phosphate from pyridoxamine 5'-phosphate: step 1/1. It functions in the pathway cofactor metabolism; pyridoxal 5'-phosphate salvage; pyridoxal 5'-phosphate from pyridoxine 5'-phosphate: step 1/1. Catalyzes the oxidation of either pyridoxine 5'-phosphate (PNP) or pyridoxamine 5'-phosphate (PMP) into pyridoxal 5'-phosphate (PLP). In Rippkaea orientalis (strain PCC 8801 / RF-1) (Cyanothece sp. (strain PCC 8801)), this protein is Pyridoxine/pyridoxamine 5'-phosphate oxidase.